The sequence spans 246 residues: Trypsin V-A (246 aa).

Residues 1 to 15 (MKICIFFTLLGTVAA) form the signal peptide. The propeptide at 16–24 (FPTEDNDDR) is activation peptide. The region spanning 25–244 (IVGGYTCQEH…YLNWIHQTIA (220 aa)) is the Peptidase S1 domain. 6 disulfides stabilise this stretch: cysteine 31-cysteine 160, cysteine 49-cysteine 65, cysteine 133-cysteine 233, cysteine 140-cysteine 206, cysteine 171-cysteine 185, and cysteine 196-cysteine 220. Catalysis depends on histidine 64, which acts as the Charge relay system. Ca(2+)-binding residues include glutamate 76, asparagine 78, and glutamate 86. Aspartate 108 functions as the Charge relay system in the catalytic mechanism. Residue serine 200 is the Charge relay system of the active site.

This sequence belongs to the peptidase S1 family. Ca(2+) serves as cofactor.

The protein resides in the secreted. The protein localises to the extracellular space. The catalysed reaction is Preferential cleavage: Arg-|-Xaa, Lys-|-Xaa.. The sequence is that of Trypsin V-A from Rattus norvegicus (Rat).